Reading from the N-terminus, the 177-residue chain is Negative modulator of initiation of replication (177 aa).

This sequence belongs to the SeqA family. Homodimer. Polymerizes to form helical filaments.

The protein resides in the cytoplasm. Its function is as follows. Negative regulator of replication initiation, which contributes to regulation of DNA replication and ensures that replication initiation occurs exactly once per chromosome per cell cycle. Binds to pairs of hemimethylated GATC sequences in the oriC region, thus preventing assembly of replication proteins and re-initiation at newly replicated origins. Repression is relieved when the region becomes fully methylated. The protein is Negative modulator of initiation of replication of Vibrio cholerae serotype O1 (strain ATCC 39315 / El Tor Inaba N16961).